We begin with the raw amino-acid sequence, 359 residues long: ELAV-like protein 2 (359 aa).

The interval 1–33 (METQLSNGPTCNNTANGPTTINNNCSSPVDSGN) is disordered. 2 consecutive RRM domains span residues 39-117 (TNLI…YARP) and 125-205 (ANLY…FANN). At S221 the chain carries Phosphoserine. An RRM 3 domain is found at 276–354 (WCIFVYNLAP…RVLQVSFKTN (79 aa)).

This sequence belongs to the RRM elav family. In terms of assembly, interacts with IGF2BP1. Interacts with MAP1B light chain LC1.

Its function is as follows. RNA-binding protein that binds to the 3' untranslated region (3'UTR) of target mRNAs. Seems to recognize a GAAA motif. Can bind to its own 3'UTR, the FOS 3'UTR and the ID 3'UTR. The polypeptide is ELAV-like protein 2 (ELAVL2) (Pongo abelii (Sumatran orangutan)).